We begin with the raw amino-acid sequence, 732 residues long: Prolyl tripeptidyl peptidase (732 aa).

The N-terminal stretch at 1-24 (MKKTIFQQLFLSVCALTVALPCSA) is a signal peptide. Catalysis depends on charge relay system residues S603, D678, and H710.

This sequence belongs to the peptidase S9B family. The N-terminus is blocked.

The catalysed reaction is Hydrolysis of Xaa-Xaa-Pro-|-Yaa- releasing the N-terminal tripeptide of a peptide with Pro as the third residue (position P1) and where Yaa is not proline.. With respect to regulation, strongly inhibited by diisopropyl fluorophosphate and Pefabloc. Weakly inhibited by 3,4-dichloroisocumarin. Not inhibited by phenylmethylsulfonyl fluoride, leupeptin, antipain or prolinal. Activated by iodoacetamide. Serine proteinase. Releases tripeptides from the free amino terminus of proteins. Has a requirement for Pro in the P1 position, but is inactivated by Pro in the P1' position. In Porphyromonas gingivalis (strain ATCC BAA-308 / W83), this protein is Prolyl tripeptidyl peptidase.